A 1001-amino-acid chain; its full sequence is Kinesin-like protein KIN-14P (1001 aa).

A Calponin-homology (CH) domain is found at 53–172; sequence AIRRYEAANW…CVLSLRSFSE (120 aa). The span at 284–300 shows a compositional bias: basic and acidic residues; it reads NESVKHALDPNDDKLLS. The tract at residues 284 to 322 is disordered; it reads NESVKHALDPNDDKLLSRADTPPEMESTCTCSTGNMDEE. In terms of domain architecture, Kinesin motor spans 426–748; that stretch reads NIRVYCRVRP…LKFAERVATV (323 aa). An ATP-binding site is contributed by 509–516; it reads GQTGSGKT. Residues 756-784 adopt a coiled-coil conformation; the sequence is NKEGGEVKELKEQIACLKAALAKKDGETE. Disordered regions lie at residues 804 to 830 and 890 to 1001; these read PPAF…QKKR and EPQW…SAKK. Residues 972–984 show a composition bias toward polar residues; that stretch reads PSASTKNGKQLSL.

Belongs to the TRAFAC class myosin-kinesin ATPase superfamily. Kinesin family. KIN-14 subfamily.

This chain is Kinesin-like protein KIN-14P, found in Oryza sativa subsp. japonica (Rice).